The sequence spans 426 residues: Vitamin D3 receptor (426 aa).

The segment at residues 21 to 96 is a DNA-binding region (nuclear receptor); it reads PRICGVCGDR…IGMMKEFILT (76 aa). Cys24, Cys27, Cys41, Cys44, Cys60, Cys66, Cys76, and Cys79 together coordinate Zn(2+). NR C4-type zinc fingers lie at residues 24–44 and 60–84; these read CGVC…CEGC and CPFN…LKRC. The hinge stretch occupies residues 97 to 126; it reads DEEVQRKREMILKRKEEEALKDSLRPKLSE. One can recognise an NR LBD domain in the interval 127–422; sequence EQQRIITTLL…LTPLLFEVFG (296 aa). Tyr143 serves as a coordination point for calcitriol. Positions 147 to 215 are disordered; sequence YSDFSQFRPP…NEEDSDDPSV (69 aa). The span at 175 to 191 shows a compositional bias: low complexity; sequence SFSGNSSSSCSDHCTSS. The segment covering 192 to 204 has biased composition (polar residues); the sequence is PDTMEPTSFSNQD. Ser235 is a binding site for calcitriol. An interaction with coactivator LXXLL motif region spans residues 244–262; that stretch reads KMIPGFRDLTPEDQIVLLK. Calcitriol-binding residues include Arg272, Ser276, His304, and His396. The 9aaTAD motif lies at 415-423; it reads PLLFEVFGN.

It belongs to the nuclear hormone receptor family. NR1 subfamily. As to quaternary structure, homodimer in the absence of bound vitamin D3. Heterodimer with RXRA after vitamin D3 binding. Interacts with MED1, NCOA1, NCOA2, NCOA3 and NCOA6 coactivators, leading to a strong increase of transcription of target genes. Interacts with the corepressor NCOR1. Interacts with SNW1. Interacts with IRX4, the interaction does not affect its transactivation activity. Interacts with CRY1. Interacts with CRY2 in a ligand-dependent manner. In terms of processing, ubiquitinated by UBR5, leading to its degradation: UBR5 specifically recognizes and binds ligand-bound VDR when it is not associated with coactivators (NCOAs). In presence of NCOAs, the UBR5-degron is not accessible, preventing its ubiquitination and degradation. In terms of tissue distribution, mammary gland, expression increases during lactation. Also found in colon, expression is down-regulated at parturition.

It is found in the nucleus. It localises to the cytoplasm. In terms of biological role, nuclear receptor for calcitriol, the active form of vitamin D3 which mediates the action of this vitamin on cells. Enters the nucleus upon vitamin D3 binding where it forms heterodimers with the retinoid X receptor/RXR. The VDR-RXR heterodimers bind to specific response elements on DNA and activate the transcription of vitamin D3-responsive target genes. Plays a central role in calcium homeostasis. Also functions as a receptor for the secondary bile acid lithocholic acid (LCA) and its metabolites. In Bos taurus (Bovine), this protein is Vitamin D3 receptor (VDR).